The primary structure comprises 115 residues: DNA-directed RNA polymerase subunit omega (115 aa).

The protein belongs to the RNA polymerase subunit omega family. The RNAP catalytic core consists of 2 alpha, 1 beta, 1 beta' and 1 omega subunit. When a sigma factor is associated with the core the holoenzyme is formed, which can initiate transcription.

The catalysed reaction is RNA(n) + a ribonucleoside 5'-triphosphate = RNA(n+1) + diphosphate. Promotes RNA polymerase assembly. Latches the N- and C-terminal regions of the beta' subunit thereby facilitating its interaction with the beta and alpha subunits. The sequence is that of DNA-directed RNA polymerase subunit omega from Cutibacterium acnes (strain DSM 16379 / KPA171202) (Propionibacterium acnes).